The sequence spans 622 residues: Palmitoyltransferase ZDHHC13 (622 aa).

At Met-1 the chain carries N-acetylmethionine. Residues 1–291 (MEGPGLGSQC…RLWRWLQKCE (291 aa)) lie on the Cytoplasmic side of the membrane. 7 ANK repeats span residues 43–78 (PLIE…VRQP), 81–110 (ENVS…VVDQ), 115–144 (LNST…DPTL), 148–177 (EGFS…SVNM), 181–211 (NGQT…SLNV), 216–245 (HQNT…SLDI), and 249–277 (KGET…KMRA). A helical transmembrane segment spans residues 292 to 312 (LFLLLMLSVITMWAIGYILDF). Residues 313-320 (NSDSWLLK) are Lumenal-facing. A helical transmembrane segment spans residues 321–341 (GCLLVTLFFLTSLFPRFLVGY). The Cytoplasmic segment spans residues 342–347 (KNLVYL). Residues 348 to 368 (PTAFLLSSVFWIFMTWFILFF) form a helical membrane-spanning segment. At 369–370 (PD) the chain is on the lumenal side. A helical membrane pass occupies residues 371–391 (LAGAPFYFSFIFSIVAFLYFF). At 392–470 (YKTWATDPGF…RCIGFGNHHY (79 aa)) the chain is on the cytoplasmic side. Positions 426–476 (TFCTSCLIRKPLRSLHCHVCNCCVARYDQHCLWTGRCIGFGNHHYYIFFLF) constitute a DHHC domain. Cys-456 functions as the S-palmitoyl cysteine intermediate in the catalytic mechanism. A helical membrane pass occupies residues 471 to 491 (YIFFLFFLSMVCGWIIYGSFI). Residues 492-518 (YLSSHCATTFKEDGLWTYLNQIVACSP) are Lumenal-facing. Residues 519 to 539 (WVLYILMLATFHFSWSTFLLL) traverse the membrane as a helical segment. The Cytoplasmic portion of the chain corresponds to 540–622 (NQLFQIAFLG…PAREKVLRSV (83 aa)).

This sequence belongs to the DHHC palmitoyltransferase family. AKR/ZDHHC17 subfamily. In terms of assembly, interacts (via ANK repeats) with CLIP3. Interacts (via ANK repeats) with DNAJC5 (via C-terminus). Interacts (via ANK repeats) with HTT. Interacts (via ANK repeats) with MAP6. Interacts (via ANK repeats) with SNAP23. Interacts (via ANK repeats) with SNAP25. May interact (via ANK repeats) with SPRED2.

It localises to the golgi apparatus membrane. The protein localises to the cytoplasmic vesicle membrane. The catalysed reaction is L-cysteinyl-[protein] + hexadecanoyl-CoA = S-hexadecanoyl-L-cysteinyl-[protein] + CoA. Functionally, palmitoyltransferase that could catalyze the addition of palmitate onto various protein substrates. Palmitoyltransferase for HTT and GAD2. May play a role in Mg(2+) transport. This Homo sapiens (Human) protein is Palmitoyltransferase ZDHHC13.